The primary structure comprises 86 residues: UPF0297 protein STH1998 (86 aa).

The protein belongs to the UPF0297 family.

The polypeptide is UPF0297 protein STH1998 (Symbiobacterium thermophilum (strain DSM 24528 / JCM 14929 / IAM 14863 / T)).